A 227-amino-acid chain; its full sequence is ATP-dependent dethiobiotin synthetase BioD (227 aa).

Residue 13 to 18 (DVGKTV) coordinates ATP. A Mg(2+)-binding site is contributed by T17. K38 is an active-site residue. ATP-binding positions include D55, 116 to 119 (EGAG), and 176 to 177 (NR). Residues D55 and E116 each contribute to the Mg(2+) site.

The protein belongs to the dethiobiotin synthetase family. In terms of assembly, homodimer. Requires Mg(2+) as cofactor.

It localises to the cytoplasm. It catalyses the reaction (7R,8S)-7,8-diammoniononanoate + CO2 + ATP = (4R,5S)-dethiobiotin + ADP + phosphate + 3 H(+). Its pathway is cofactor biosynthesis; biotin biosynthesis; biotin from 7,8-diaminononanoate: step 1/2. Its function is as follows. Catalyzes a mechanistically unusual reaction, the ATP-dependent insertion of CO2 between the N7 and N8 nitrogen atoms of 7,8-diaminopelargonic acid (DAPA, also called 7,8-diammoniononanoate) to form a ureido ring. This chain is ATP-dependent dethiobiotin synthetase BioD, found in Aliivibrio salmonicida (strain LFI1238) (Vibrio salmonicida (strain LFI1238)).